The primary structure comprises 420 residues: Signal recognition particle receptor FtsY (420 aa).

Residues aspartate 28–lysine 62 show a composition bias toward basic and acidic residues. The interval aspartate 28–arginine 118 is disordered. Residues alanine 63–proline 104 are compositionally biased toward low complexity. GTP contacts are provided by residues glycine 227–threonine 234, aspartate 310–arginine 314, and serine 372–aspartate 375.

This sequence belongs to the GTP-binding SRP family. FtsY subfamily. Part of the signal recognition particle protein translocation system, which is composed of SRP and FtsY.

It is found in the cell membrane. Its subcellular location is the cytoplasm. The catalysed reaction is GTP + H2O = GDP + phosphate + H(+). In terms of biological role, involved in targeting and insertion of nascent membrane proteins into the cytoplasmic membrane. Acts as a receptor for the complex formed by the signal recognition particle (SRP) and the ribosome-nascent chain (RNC). The protein is Signal recognition particle receptor FtsY of Bifidobacterium longum (strain NCC 2705).